The following is a 368-amino-acid chain: 2-oxoglutarate-dependent dioxygenase frbJ (368 aa).

Residues 171–277 (QQHKLKIVKY…RYSIPFFQGV (107 aa)) enclose the Fe2OG dioxygenase domain. Fe cation-binding residues include H198, D200, and H256. 2-oxoglutarate is bound at residue R268.

Belongs to the iron/ascorbate-dependent oxidoreductase family.

It functions in the pathway antifungal biosynthesis. 2-oxoglutarate-dependent dioxygenase; part of the gene cluster that mediates the biosynthesis of the antifungal antibiotic FR901469, an inhibitor of beta-1,3-glucansynthase, exerting antifungal activity against the pathogenes Candida albicans and Aspergillus fumigatus. FR901469 is a cyclic depsipeptide containing 12 amino acid residues and a fatty acid chain. The NRPS frbI contains 12 modules responsible for the formation of the depsipeptide backbone which is denoted as Acyl-Thr-Ala-Tyr-Val-4OHPro-Thr-Thr-3OHPro-threo3OHGln-Gly-Thr-Orn-OH (C71H116N14O23). The PKS frbB is probably involved in the production of the hydrocarbon chain, and the acyl-CoA ligase frbC might be involved in the transport of the chain to the peptide ptoduct of frbI. Because FR901469 contains 3 hydroxylated amino acid residues, the 3 oxygenases frbA, frbH, and frbJ might be participating in amino acid hydroxylation. As no thioesterase domains were detected in frbI or frbB, the thioesterases frbD and frbE may instead release and cyclize the products of the NRPS and PKS, respectively. This Dothideomycetidae sp. (strain 11243) (Fungal sp. (strain No.11243)) protein is 2-oxoglutarate-dependent dioxygenase frbJ.